The chain runs to 478 residues: Methionine aminopeptidase 2 (478 aa).

The interval 1-123 (MAGVEEASSF…DPPSVPICDL (123 aa)) is disordered. The residue at position 2 (A2) is an N-acetylalanine. Positions 36 to 46 (KKKRRKKKKGK) are enriched in basic residues. The segment covering 55-79 (ELDKESGTSVDEVAKQLERQALEEK) has biased composition (basic and acidic residues). A phosphoserine; alternate mark is found at S60 and S63. O-linked (GlcNAc) serine; alternate glycans are attached at residues S60 and S63. A compositionally biased stretch (acidic residues) spans 80–92 (EKDDDDEDGDGDG). The span at 97–109 (GKKKKKKKKKRGP) shows a compositional bias: basic residues. Position 231 (H231) interacts with substrate. Positions 251, 262, and 331 each coordinate a divalent metal cation. H339 serves as a coordination point for substrate. Residues E364 and E459 each contribute to the a divalent metal cation site.

It belongs to the peptidase M24A family. Methionine aminopeptidase eukaryotic type 2 subfamily. As to quaternary structure, binds EIF2S1 at low magnesium concentrations. Interacts strongly with the eIF-2 gamma-subunit EIF2S3. Co(2+) serves as cofactor. The cofactor is Zn(2+). Mn(2+) is required as a cofactor. It depends on Fe(2+) as a cofactor. In terms of processing, O-glycosylated; contains 12 O-linked GlcNAc. Post-translationally, contains approximately 12 O-linked N-acetylglucosamine (GlcNAc) residues. O-glycosylation is required for EIF2S1 binding.

The protein resides in the cytoplasm. The catalysed reaction is Release of N-terminal amino acids, preferentially methionine, from peptides and arylamides.. Cotranslationally removes the N-terminal methionine from nascent proteins. The N-terminal methionine is often cleaved when the second residue in the primary sequence is small and uncharged (Met-Ala-, Cys, Gly, Pro, Ser, Thr, or Val). Its function is as follows. Protects eukaryotic initiation factor EIF2S1 from translation-inhibiting phosphorylation by inhibitory kinases such as EIF2AK2/PKR and EIF2AK1/HCR. Plays a critical role in the regulation of protein synthesis. In Rattus norvegicus (Rat), this protein is Methionine aminopeptidase 2 (Metap2).